The sequence spans 436 residues: MRQALPLVTRQGDRIAIVSGLRTPFARQATAFHGIPAVDLGKMVVGELLARSEIPADAIEQLVFGQVVQMPEAPNIAREIVLGTGMNVHTDAYSVSRACATSFQAVANVAESLMAGTIRAGIAGGADSSSVLPIGVSKALARVLVDVNKARTTRQRLTLFSRLRLRDLLPVPPAVAEYSTGLRMGDTAEQMAKTYGITREQQDALAHRSHQRAAQAWAEGKLAEEVMTTYVPPYKNPFTEDNNIRGTSTLADYAKLRPAFDRKHGSVTAANSTPLTDGAAAVILMTESRAKELGLRPLGYLRSYAFTAIDVWQDMLLGPAWSTPLALERAGLTMADLTLFDMHEAFAAQTLANLQLLGSERFAREVLGRAQATGEVDDAKFNVLGGSIAYGHPFAATGARMITQTLHELRRRGGGFGLVTACAAGGLGAAMVLEAE.

The active-site Acyl-thioester intermediate is cysteine 99. Residues histidine 392 and cysteine 422 each act as proton acceptor in the active site.

It belongs to the thiolase-like superfamily. Thiolase family. As to quaternary structure, heterotetramer of two alpha chains (FadJ) and two beta chains (FadI).

It localises to the cytoplasm. It carries out the reaction an acyl-CoA + acetyl-CoA = a 3-oxoacyl-CoA + CoA. The protein operates within lipid metabolism; fatty acid beta-oxidation. Catalyzes the final step of fatty acid oxidation in which acetyl-CoA is released and the CoA ester of a fatty acid two carbons shorter is formed. This is 3-ketoacyl-CoA thiolase from Salmonella choleraesuis (strain SC-B67).